The primary structure comprises 246 residues: Exosome complex component Rrp41 (246 aa).

It belongs to the RNase PH family. Rrp41 subfamily. In terms of assembly, component of the archaeal exosome complex. Forms a hexameric ring-like arrangement composed of 3 Rrp41-Rrp42 heterodimers. The hexameric ring associates with a trimer of Rrp4 and/or Csl4 subunits.

It localises to the cytoplasm. Catalytic component of the exosome, which is a complex involved in RNA degradation. Has 3'-&gt;5' exoribonuclease activity. Can also synthesize heteromeric RNA-tails. In Aeropyrum pernix (strain ATCC 700893 / DSM 11879 / JCM 9820 / NBRC 100138 / K1), this protein is Exosome complex component Rrp41.